A 237-amino-acid polypeptide reads, in one-letter code: Dihydroceramide fatty acyl 2-hydroxylase FAH2 (237 aa).

The next 2 membrane-spanning stretches (helical) occupy residues 54–74 (VWWAIPTIWLPVVCYVLSISA) and 77–97 (GLTFPQIGLIVAFGVLTWTLL). Residues histidine 102, histidine 107, histidine 123, histidine 126, and histidine 127 each coordinate Zn(2+). The next 2 helical transmembrane spans lie at 134–154 (LRLVFPPTATAILLVPLWKLL) and 156–176 (LLATPATAPAILGGILFGYVM). Positions 181, 185, 201, 204, and 205 each coordinate Zn(2+).

Belongs to the sterol desaturase family. Interacts with CYTB5-A, CYTB5-B, CYTB5-C and CYTB5-D. It depends on Zn(2+) as a cofactor. As to expression, expressed in leaves, roots, flowers and seeds.

Its subcellular location is the endoplasmic reticulum membrane. It carries out the reaction an N-(1,2-saturated acyl)sphinganine + 2 Fe(II)-[cytochrome b5] + O2 + 2 H(+) = an N-[(2'R)-hydroxyacyl]sphinganine + 2 Fe(III)-[cytochrome b5] + H2O. Functionally, fatty acid 2-hydroxylase involved in the alpha-hydroxylation of the long-chain fatty acid (LCFA) palmitic acid. Probably involved in the resistance response to oxidative stress. The chain is Dihydroceramide fatty acyl 2-hydroxylase FAH2 from Arabidopsis thaliana (Mouse-ear cress).